The primary structure comprises 619 residues: E3 ubiquitin-protein ligase DTX4 (619 aa).

2 consecutive WWE domains span residues methionine 1–arginine 78 and asparagine 79–arginine 155. Disordered regions lie at residues lysine 238–asparagine 281 and proline 358–threonine 389. The span at glutamine 261–serine 273 shows a compositional bias: polar residues. The span at lysine 378–glycine 387 shows a compositional bias: basic residues. Residues cysteine 409–lysine 468 form an RING-type; atypical zinc finger.

This sequence belongs to the Deltex family. As to quaternary structure, interacts with NLRP4.

It is found in the cytoplasm. The catalysed reaction is S-ubiquitinyl-[E2 ubiquitin-conjugating enzyme]-L-cysteine + [acceptor protein]-L-lysine = [E2 ubiquitin-conjugating enzyme]-L-cysteine + N(6)-ubiquitinyl-[acceptor protein]-L-lysine.. Its pathway is protein modification; protein ubiquitination. Regulator of Notch signaling, a signaling pathway involved in cell-cell communications that regulates a broad spectrum of cell-fate determinations. Functions as a ubiquitin ligase protein in vivo, mediating 'Lys48'-linked polyubiquitination and promoting degradation of TBK1, targeting to TBK1 requires interaction with NLRP4. The polypeptide is E3 ubiquitin-protein ligase DTX4 (DTX4) (Homo sapiens (Human)).